A 387-amino-acid chain; its full sequence is Dynactin subunit 2 (387 aa).

3 coiled-coil regions span residues 99–125, 256–282, and 355–387; these read LQRCHRLKCEMNELMEEIEASRADTGR, SQLDTIEQRLNNLLQQMNSIQEKSNAT, and TGVQEAFAQNLENVNKEVKKLEERMTKLQQMIK.

The protein belongs to the dynactin subunit 2 family. As to quaternary structure, subunit of dynactin, a multiprotein complex associated with dynein.

Its subcellular location is the cytoplasm. It is found in the cytoskeleton. The protein resides in the membrane. Its function is as follows. Modulates cytoplasmic dynein binding to an organelle, and plays a role in prometaphase chromosome alignment and spindle organization during mitosis. This is Dynactin subunit 2 from Anopheles gambiae (African malaria mosquito).